Here is a 2856-residue protein sequence, read N- to C-terminus: MASEDNRAPSRPPTGDDGGGGGKEETPTEGGALSLKPGLPIRGIRMKFAVLTGLVEVGEVSNRDIVETVFNLLVGGQFDLEMNFIIQEGESIMCMVELLEKCDVTCQAEVWSMFTAILKKSIRNLQVCTEVGLVEKVLGKIEKVDSMIADLLVDMLGVLASYNLTVRELKLFFSKLQGDKGQWPPHAGKLLSVLKHMPQKYGPDAFFNFPGKSAAAIALPPIARWPYQNGFTFHTWLRMDPVNNINVDKDKPYLYCFRTSKGLGYSAHFVGGCLIITSIKSKGKGFQHCVKFDFKPQKWYMVTIVHIYNRWKNSELRCYVNGELASYGEITWFVNTSDTFDKCFLGSSETADANRVFCGQMTAVYLFSDALNAAQIFAIYQLGLGYKGTFKFKAESDLFLAEHHKLLLYDGKLSSAIAFMYNPRATDAQLCLESSPKDNPSIFVHSPHALMLQDVKAVLTHSIQSAMHSIGGVQVLFPLFAQLDYKQYLSDEVDLTICTTLLAFIMELLKNSIAMQEQMLACKGFLVIGYSLEKSSKSHVSRAVLELCLAFSKYLSNLQNGMPLLKQLCDHILLNPAVWIHTPAKVQLMLYTYLSTEFIGTVNIYNTIRRVGTVLLIMHTLKYYYWAVNPQDRSGITPKGLDGPRPNQKEILSLRAFLLMFIKQLVMKDSGVKEDELQAILNYLLTMHEDDNLMDVLQLLVALMAEHPNSMIPAFDQRNGLRVIYKLLASKSEGIRVQALKALGYFLKHLAPKRKAEVMLGHGLFSLLAERLMLQTNLITMTMYNVLFEILIEQICTQVIHKQHPDPDSTVKIQNPQILKVIATLLRNSPQCPESMEVRRAFLSDMIKLFNNSRENRRSLLQCSVWQEWMLSLCYFNPKNSDEQKITEMVYAIFRILLYHAVKYEWGGWRVWVDTLSITHSKVTFEIHKENLANIFREEQRKGDEETGPCSSSLVPEGTGATRGVDVSVGSQHEDRKDSPISPHFTRNSDENSSIGRASSIDSASNTELQTHDMSSDEKKVERENQELLDQATVEETATNGAKDDLETSSDAAEPVTINSNSLEPGKDTVTISEVSASISSPSEEDAAEMPELLEKSGVEEKEDDDYVELKVEGSPTEEAGLPTELQGEGLSVAASGGREEPDMCGHGCEVQVEAPITKIHNDPETTDSEDSRFPTVATAGSLATSSEVPVPQATVQSDSHEMLDGGMKATNLAGETESVSDCADNVSEAPATSEQKITKLDVSSVASDTERFELKASTSTEAPQPQRHGLEISRQQEQTAQGTAPDAVDQQRRDSRSTMFRIPEFKWSQMHQRLLTDLLFSIETDIQMWRSHSTKTVMDFVNSSDNVIFVHNTIHLISQVMDNMVMACGGILPLLSAATSATHELENIEPTQGLSIEASVTFLQRLISLVDVLIFASSLGFTEIEAEKNMSSGGILRQCLRLVCAVAVRNCLECQQHSQLKARGDTAKSSKTIHSLIPMGKSAAKSPVDIVTGGISSVRDLDRLPARTWTLIGLRAVVFRDIEDSKQAQFLALAVVYFISVLMVSKYRDILEPQDERHSQSLKETSSDNGNASLPDAENTPAEFSSLTLSSVEESLEGTSCTRRRDSGLGEETASGLGSGLSVASPAAPLGVSAGPDAISEVLCTLSLEVNKSQETRIDGGNELDRKVTPSVPVSKNVNVKDILRSLVNMPADGVTVDPALLPPACLGALGDLSVDPPMQFRSFDRSVIIATKKSSVLPSALTTSAPSSAVSVVSSVDPTHASDTGGESPGSRSPKCKTALSCKQLAPSHKTPAAHMSITERLEHALEKAAPLLREIFVDFAPFLSRTLLGSHGQELLIEGTSLVCMKSSSSVVELVMLLCSQEWQNSIQKNAGLAFIELVNEGRLLSQTMKDHLVRVANEAEFILSRQRAEDIHRHAEFESLCAQYSADKREEEKMCDHLIRAAKYRDHVTATQLIQKIINLLTDKHGAWGSSAVSRPREFWRLDYWEDDLRRRRRFVRNPLGSTHPEATLKTAVEHAADEDILAKGKQSIKSQALGNQNSENEALLEGDDDTLSSVDEKDLENLAGPVSLSTPAQLVAPSVVVKGTLSVTSSELYFEVDEEDPNFKKIDPKILAYTEGLHGKWLFTEIRSIFSRRYLLQNTALEIFMANRVAVMFNFPDPATVKKVVNYLPRVGVGTSFGLPQTRRISLATPRQLFKASNMTQRWQHREISNFEYLMFLNTIAGRSYNDLNQYPVFPWVITNYESEELDLTLPSNFRDLSKPIGALNPKRAAFFAERFESWEDDQVPKFHYGTHYSTASFVLAWLLRIEPFTTYFLNLQGGKFDHADRTFSSVSRAWRNSQRDTSDIKELIPEFYYLPEMFVNFNNYNLGVMDDGTVVSDVELPPWAKTSEEFVRINRLALESEFVSCQLHQWIDLIFGYKQQGPEAVRALNVFYYLTYEGAVNLNSITDPVLREAVEAQIRSFGQTPSQLLIEPHPPRGSAMQASPLMFTDQAQQDVIMVLKFPSNSPVTHVAANTQPGLAMPAVITVTANRLFAVNKWHNLPAHQGAVQDQPYQLPVEIDPLIACGTGTHRRQVTDLLDQSIQVHSQCFVITSDNRYILVCGFWDKSFRVYSTDTGKLIQVVFGHWDVVTCLARSESYIGGNCYILSGSRDATLLLWYWNGKSSGIGDNPGGETATPRAILTGHDYEITCAAVCAELGLVLSGSQEGPCLIHSMNGDLLRTLEGPENCLKPKLIQASREGHCVIFYENGCFCTFSVNGKLQATVETDDHIRAIQLSRDGQYLLTGGDNGVVIVRQVSDLKQLFAYPGCDAGIRAMALSFDQRCIISGMASGSIVLFYNDFNRWHHEYQTRY.

2 disordered regions span residues 1–35 (MASEDNRAPSRPPTGDDGGGGGKEETPTEGGALSL) and 939–1107 (EQRK…DDDY). Ala2 carries the post-translational modification N-acetylalanine. Phosphoserine is present on residues Ser10, Ser979, and Ser1003. Residues 991–1009 (ENSSIGRASSIDSASNTEL) show a composition bias toward polar residues. Positions 1010 to 1026 (QTHDMSSDEKKVERENQ) are enriched in basic and acidic residues. Positions 1073–1082 (SEVSASISSP) are enriched in low complexity. Phosphoserine is present on residues Ser1097, Ser1132, Ser1136, Ser1219, Ser1221, Ser1228, Ser1244, and Ser1258. The tract at residues 1253 to 1296 (FELKASTSTEAPQPQRHGLEISRQQEQTAQGTAPDAVDQQRRDS) is disordered. A compositionally biased stretch (polar residues) spans 1274-1283 (SRQQEQTAQG). One copy of the WD 1 repeat lies at 1298-1340 (STMFRIPEFKWSQMHQRLLTDLLFSIETDIQMWRSHSTKTVMD). 2 positions are modified to phosphoserine: Ser1487 and Ser1497. A helical transmembrane segment spans residues 1529–1545 (AQFLALAVVYFISVLMV). 2 disordered regions span residues 1556–1621 (DERH…LGSG) and 1750–1778 (SAVSVVSSVDPTHASDTGGESPGSRSPKC). The span at 1563–1573 (LKETSSDNGNA) shows a compositional bias: polar residues. Low complexity predominate over residues 1586–1601 (SSLTLSSVEESLEGTS). A phosphoserine mark is found at Ser1608, Ser1770, Ser1773, and Ser2057. The 109-residue stretch at 2066–2174 (NLAGPVSLST…TVKKVVNYLP (109 aa)) folds into the BEACH-type PH domain. In terms of domain architecture, BEACH spans 2193-2482 (ATPRQLFKAS…QLLIEPHPPR (290 aa)). Ser2489 bears the Phosphoserine mark. WD repeat units lie at residues 2584–2626 (DQSI…LIQV), 2629–2672 (GHWD…SGIG), 2688–2728 (GHDY…RTLE), 2770–2809 (ETDDHIRAIQLSRDGQYLLTGGDNGVVIVRQVSDLKQLFA), and 2812–2851 (GCDAGIRAMALSFDQRCIISGMASGSIVLFYNDFNRWHHE).

Interacts with TOM1 and TOLLIP. Isoform 1 is expressed in the brain, is absent from the lung and the bone marrow and is less abundant in the spleen. Isoform 2 is expressed in the spleen, lung, brain and bone marrow. Isoform 3 is expressed in the brain, is absent from the bone marrow and is less abundant in the spleen and lung.

The protein resides in the cell membrane. It is found in the endoplasmic reticulum membrane. It localises to the golgi apparatus. Its subcellular location is the trans-Golgi network membrane. The protein localises to the lysosome membrane. Functionally, involved in coupling signal transduction and vesicle trafficking to enable polarized secretion and/or membrane deposition of immune effector molecules. Involved in phagophore growth during mitophagy by regulating ATG9A trafficking to mitochondria. The chain is Lipopolysaccharide-responsive and beige-like anchor protein (Lrba) from Mus musculus (Mouse).